We begin with the raw amino-acid sequence, 175 residues long: Adenine phosphoribosyltransferase (175 aa).

It belongs to the purine/pyrimidine phosphoribosyltransferase family. In terms of assembly, homodimer.

The protein resides in the cytoplasm. The catalysed reaction is AMP + diphosphate = 5-phospho-alpha-D-ribose 1-diphosphate + adenine. The protein operates within purine metabolism; AMP biosynthesis via salvage pathway; AMP from adenine: step 1/1. Its function is as follows. Catalyzes a salvage reaction resulting in the formation of AMP, that is energically less costly than de novo synthesis. In Maricaulis maris (strain MCS10) (Caulobacter maris), this protein is Adenine phosphoribosyltransferase.